Here is a 1168-residue protein sequence, read N- to C-terminus: Transcription-repair-coupling factor (1168 aa).

The Helicase ATP-binding domain occupies 633–794; it reads DMQKSRPMDR…MLGVRDLSVI (162 aa). 646-653 is an ATP binding site; the sequence is GDVGYGKT. A DEEQ box motif is present at residues 747 to 750; the sequence is DEEQ. Positions 808–969 constitute a Helicase C-terminal domain; the sequence is VLEQNMSFIK…GFKIAMRDLN (162 aa).

This sequence in the N-terminal section; belongs to the UvrB family. In the C-terminal section; belongs to the helicase family. RecG subfamily.

It is found in the cytoplasm. Functionally, couples transcription and DNA repair by recognizing RNA polymerase (RNAP) stalled at DNA lesions. Mediates ATP-dependent release of RNAP and its truncated transcript from the DNA, and recruitment of nucleotide excision repair machinery to the damaged site. This is Transcription-repair-coupling factor from Staphylococcus aureus (strain MRSA252).